The following is a 632-amino-acid chain: Nucleoside triphosphatase I (632 aa).

A Helicase ATP-binding domain is found at 42 to 204 (FLGLDKMHSL…VMLVNLLRPK (163 aa)). 55-62 (HETGVGKT) contributes to the ATP binding site. Residues 141–144 (DECH) carry the DEXH box motif. A Helicase C-terminal domain is found at 367-532 (KFTDVCLRIL…EFTQLFKVFK (166 aa)). A binding to the cap-specific mRNA (nucleoside-2'-O-)-methyltransferase region spans residues 457–524 (DIFILDMTWN…DIIRTKSKEF (68 aa)).

Belongs to the helicase family. NPH I subfamily. Monomer. Interacts (via C-terminus) with RAP94 (via N-terminus). Interacts with the cap-specific mRNA (nucleoside-2'-O-)-methyltransferase.

Its subcellular location is the virion. The catalysed reaction is a ribonucleoside 5'-triphosphate + H2O = a ribonucleoside 5'-diphosphate + phosphate + H(+). Its function is as follows. DNA-dependent ATPase required for providing the needed energy to achieve the termination of early transcripts. Acts in concert with the RAP94 subunit of the virion RNA polymerase and the capping enzyme/VTF to catalyze release of UUUUUNU-containing nascent RNA from the elongation complex. NPH-I must bind ssDNA in order to exhibit ATPase activity. The sequence is that of Nucleoside triphosphatase I (NPH1) from Myxoma virus (strain Lausanne) (MYXV).